Consider the following 530-residue polypeptide: MLASTFSYRMYKTALILAALLGSGQAQQVGTSQAEVHPSMTWQSCTAGGSCTTNNGKVVIDANWRWVHKVGDYTNCYTGNTWDKTLCPDDATCASNCALEGANYQSTYGATTSGDSLRLNFVTTSQQKNIGSRLYMMKDDTTYEMFKLLNQEFTFDVDVSNLPCGLNGALYFVAMDADGGMSKYPTNKAGAKYGTGYCDSQCPRDLKFINGQANVEGWQPSSNDANAGTGNHGSCCAEMDIWEANSISTAFTPHPCDTPGQVMCTGDACGGTYSSDRYGGTCDPDGCDFNSFRQGNKTFYGPGMTVDTKSKFTVVTQFITDDGTASGTLKEIKRFYVQNGKVIPNSESTWSGVGGNSITNDYCTAQKSLFKDQNVFAKHGGMEGMGAALAQGMVLVMSLWDDHAANMLWLDSNYPTTASSSTPGVARGTCDISSGVPADVEANHPDASVVYSNIKVGPIGSTFNSGGSNPGGGTTTTAKPTTTTTTAGSPGGTGVAQHYGQCGGNGWQGPTTCASPYTCQKLNDFYSQCL.

The first 26 residues, 1–26, serve as a signal peptide directing secretion; that stretch reads MLASTFSYRMYKTALILAALLGSGQA. The segment at 27–461 is catalytic; the sequence is QQVGTSQAEV…SNIKVGPIGS (435 aa). Residue Glu-238 is the Nucleophile of the active site. Glu-243 serves as the catalytic Proton donor. N-linked (GlcNAc...) asparagine glycosylation is present at Asn-296. The interval 462–492 is disordered; that stretch reads TFNSGGSNPGGGTTTTAKPTTTTTTAGSPGG. The segment at 462-494 is ser/Thr-rich linker; that stretch reads TFNSGGSNPGGGTTTTAKPTTTTTTAGSPGGTG. The segment covering 475–488 has biased composition (low complexity); that stretch reads TTTAKPTTTTTTAG. The CBM1 domain occupies 494–530; sequence GVAQHYGQCGGNGWQGPTTCASPYTCQKLNDFYSQCL. 2 disulfide bridges follow: Cys-502–Cys-519 and Cys-513–Cys-529.

It belongs to the glycosyl hydrolase 7 (cellulase C) family.

The protein localises to the secreted. The enzyme catalyses Hydrolysis of (1-&gt;4)-beta-D-glucosidic linkages in cellulose and cellotetraose, releasing cellobiose from the non-reducing ends of the chains.. Functionally, the biological conversion of cellulose to glucose generally requires three types of hydrolytic enzymes: (1) Endoglucanases which cut internal beta-1,4-glucosidic bonds; (2) Exocellobiohydrolases that cut the disaccharide cellobiose from the non-reducing end of the cellulose polymer chain; (3) Beta-1,4-glucosidases which hydrolyze the cellobiose and other short cello-oligosaccharides to glucose. The sequence is that of Probable 1,4-beta-D-glucan cellobiohydrolase B (cbhB) from Neosartorya fischeri (strain ATCC 1020 / DSM 3700 / CBS 544.65 / FGSC A1164 / JCM 1740 / NRRL 181 / WB 181) (Aspergillus fischerianus).